Consider the following 300-residue polypeptide: 17-beta-hydroxysteroid dehydrogenase 13 (300 aa).

The first 19 residues, 1–19 (MNLILELLLLVGIIIYSYL), serve as a signal peptide directing secretion. The residue at position 33 (Ser33) is a Phosphoserine. 40–67 (LITGAGHGIGRLTAYEFAKQKSRLVLWD) lines the NAD(+) pocket. Position 69 is a phosphoserine (Ser69). Residue Lys79 is modified to N6-acetyllysine. Ser172 serves as a coordination point for substrate. Catalysis depends on Tyr185, which acts as the Proton acceptor. Lys189 lines the NAD(+) pocket.

The protein belongs to the short-chain dehydrogenases/reductases (SDR) family.

The protein localises to the lipid droplet. Its subcellular location is the endoplasmic reticulum. The catalysed reaction is 17beta-estradiol + NAD(+) = estrone + NADH + H(+). The enzyme catalyses all-trans-retinol + NAD(+) = all-trans-retinal + NADH + H(+). It carries out the reaction all-trans-retinal + NAD(+) + H2O = all-trans-retinoate + NADH + 2 H(+). Its function is as follows. Plays a pivotal role in hepatic lipid metabolism. In vitro, it catalyzes the oxidation of a variety of lipid substrates, including 17beta-estradiol, retinol, retinal, and leukotriene B4. The sequence is that of 17-beta-hydroxysteroid dehydrogenase 13 (Hsd17b13) from Rattus norvegicus (Rat).